The sequence spans 1711 residues: MSAKVRLKKLEQLLLDGPWRNESALSVETLLDVLVCLYTECSHSALRRDKYVAEFLEWAKPFTQLVKEMQLHREDFEIIKVIGRGAFGEVAVVKMKNTERIYAMKILNKWEMLKRAETACFREERDVLVNGDCQWITALHYAFQDENHLYLVMDYYVGGDLLTLLSKFEDKLPEDMARFYIGEMVLAIDSIHQLHYVHRDIKPDNVLLDVNGHIRLADFGSCLKMNDDGTVQSSVAVGTPDYISPEILQAMEDGMGKYGPECDWWSLGVCMYEMLYGETPFYAESLVETYGKIMNHEERFQFPSHVTDVSEEAKDLIQRLICSRERRLGQNGIEDFKKHAFFEGLNWENIRNLEAPYIPDVSSPSDTSNFDVDDDVLRNTEILPPGSHTGFSGLHLPFIGFTFTTESCFSDRGSLKSIMQSNTLTKDEDVQRDLEHSLQMEAYERRIRRLEQEKLELSRKLQESTQTVQSLHGSSRALSNSNRDKEIKKLNEEIERLKNKIADSNRLERQLEDTVALRQEREDSTQRLRGLEKQHRVVRQEKEELHKQLVEASERLKSQAKELKDAHQQRKLALQEFSELNERMAELRAQKQKVSRQLRDKEEEMEVATQKVDAMRQEMRRAEKLRKELEAQLDDAVAEASKERKLREHSENFCKQMESELEALKVKQGGRGAGATLEHQQEISKIKSELEKKVLFYEEELVRREASHVLEVKNVKKEVHDSESHQLALQKEILMLKDKLEKSKRERHNEMEEAVGTIKDKYERERAMLFDENKKLTAENEKLCSFVDKLTAQNRQLEDELQDLAAKKESVAHWEAQIAEIIQWVSDEKDARGYLQALASKMTEELEALRSSSLGSRTLDPLWKVRRSQKLDMSARLELQSALEAEIRAKQLVQEELRKVKDANLTLESKLKDSEAKNRELLEEMEILKKKMEEKFRADTGLKLPDFQDSIFEYFNTAPLAHDLTFRTSSASEQETQAPKPEASPSMSVAASEQQEDMARPPQRPSAVPLPTTQALALAGPKPKAHQFSIKSFSSPTQCSHCTSLMVGLIRQGYACEVCSFACHVSCKDGAPQVCPIPPEQSKRPLGVDVQRGIGTAYKGHVKVPKPTGVKKGWQRAYAVVCDCKLFLYDLPEGKSTQPGVIASQVLDLRDDEFSVSSVLASDVIHATRRDIPCIFRVTASLLGAPSKTSSLLILTENENEKRKWVGILEGLQSILHKNRLRNQVVHVPLEAYDSSLPLIKAILTAAIVDADRIAVGLEEGLYVIEVTRDVIVRAADCKKVHQIELAPREKIVILLCGRNHHVHLYPWSSLDGAEGSFDIKLPETKGCQLMATATLKRNSGTCLFVAVKRLILCYEIQRTKPFHRKFNEIVAPGSVQCLAVLRDRLCVGYPSGFCLLSIQGDGQPLNLVNPNDPSLAFLSQQSFDALCAVELESEEYLLCFSHMGLYVDPQGRRARAQELMWPAAPVACSCSPTHVTVYSEYGVDVFDVRTMEWVQTIGLRRIRPLNSEGTLNLLNCEPPRLIYFKSKFSGAVLNVPDTSDNSKKQMLRTRSKRRFVFKVPEEERLQQRREMLRDPELRSKMISNPTNFNHVAHMGPGDGMQVLMDLPLSAVPPSQEERPGPAPTNLARQPPSRNKPYISWPSSGGSEPSVTVPLRSMSDPDQDFDKEPDSDSTKHSTPSNSSNPSGPPSPNSPHRSQLPLEGLEQPACDT.

The region spanning 76-342 (FEIIKVIGRG…IEDFKKHAFF (267 aa)) is the Protein kinase domain. ATP is bound by residues 82–90 (IGRGAFGEV) and lysine 105. The Proton acceptor role is filled by aspartate 200. 2 positions are modified to phosphoserine; by autocatalysis: serine 221 and serine 233. Threonine 239 is modified (phosphothreonine; by autocatalysis). The 71-residue stretch at 343–413 (EGLNWENIRN…TTESCFSDRG (71 aa)) folds into the AGC-kinase C-terminal domain. Residue threonine 423 is modified to Phosphothreonine. Coiled coils occupy residues 431–815 (QRDL…AHWE) and 878–939 (ELQS…FRAD). The interval 461–484 (LQESTQTVQSLHGSSRALSNSNRD) is disordered. Polar residues predominate over residues 463–481 (ESTQTVQSLHGSSRALSNS). Arginine 671 bears the Omega-N-methylarginine mark. Phosphotyrosine is present on tyrosine 954. Positions 969 to 1009 (SSASEQETQAPKPEASPSMSVAASEQQEDMARPPQRPSAVP) are disordered. The Phorbol-ester/DAG-type zinc-finger motif lies at 1025–1075 (AHQFSIKSFSSPTQCSHCTSLMVGLIRQGYACEVCSFACHVSCKDGAPQVC). Positions 1095–1214 (GTAYKGHVKV…WVGILEGLQS (120 aa)) constitute a PH domain. The CNH domain maps to 1240–1513 (IKAILTAAIV…RPLNSEGTLN (274 aa)). Residues 1583-1596 (ISNPTNFNHVAHMG) enclose the CRIB domain. A disordered region spans residues 1611–1711 (AVPPSQEERP…EGLEQPACDT (101 aa)). The segment covering 1641–1650 (WPSSGGSEPS) has biased composition (polar residues). Positions 1664 to 1675 (DFDKEPDSDSTK) are enriched in basic and acidic residues. Serine 1680, serine 1682, serine 1686, serine 1690, and serine 1693 each carry phosphoserine.

Belongs to the protein kinase superfamily. AGC Ser/Thr protein kinase family. DMPK subfamily. As to quaternary structure, homodimer and homotetramer via the coiled coil regions. Interacts tightly with GTP-bound but not GDP-bound CDC42. Interacts with TJP1, when in the presence of catalytically active CDC42. Forms a tripartite complex with MYO18A and LURAP1 with the latter acting as an adapter connecting CDC42BPB and MYO18A. LURAP1 binding results in activation of CDC42BPB by abolition of its negative autoregulation. Interacts with STRIP1, STRN3 and SIKE1. Interacts with CPNE4 (via VWFA domain). Interacts with LURAP1. Interacts (via AGC-kinase C-terminal domain) with FAM89B/LRAP25 (via LRR repeat). Forms a tripartite complex with FAM89B/LRAP25 and LIMK1. It depends on Mg(2+) as a cofactor. Post-translationally, proteolytically cleaved by caspases upon apoptosis induction. As to expression, expressed in all tissues examined, with high levels in heart, brain, placenta and lung.

The protein localises to the cytoplasm. It is found in the cell membrane. The protein resides in the cell junction. Its subcellular location is the cell projection. It localises to the lamellipodium. The enzyme catalyses L-seryl-[protein] + ATP = O-phospho-L-seryl-[protein] + ADP + H(+). It carries out the reaction L-threonyl-[protein] + ATP = O-phospho-L-threonyl-[protein] + ADP + H(+). Maintained in an inactive, closed conformation by an interaction between the kinase domain and the negative autoregulatory C-terminal coiled-coil region. Agonist binding to the phorbol ester binding site disrupts this, releasing the kinase domain to allow N-terminus-mediated dimerization and kinase activation by transautophosphorylation. Inhibited by chelerythrine chloride. Serine/threonine-protein kinase which is an important downstream effector of CDC42 and plays a role in the regulation of cytoskeleton reorganization and cell migration. Regulates actin cytoskeletal reorganization via phosphorylation of PPP1R12C and MYL9/MLC2. In concert with MYO18A and LURAP1, is involved in modulating lamellar actomyosin retrograde flow that is crucial to cell protrusion and migration. Phosphorylates PPP1R12A. In concert with FAM89B/LRAP25 mediates the targeting of LIMK1 to the lamellipodium resulting in its activation and subsequent phosphorylation of CFL1 which is important for lamellipodial F-actin regulation. The sequence is that of Serine/threonine-protein kinase MRCK beta from Homo sapiens (Human).